The sequence spans 163 residues: MLCPSCNSESSRVVDSRSIEMGVSIRRRRECSECQTRFTTIERSVLLVVKRNGVTEEFSREKVIKGVRRACQGRDVSDDALKRLAHEVEQAVRVAHGSQVPANQIGLAILDPLRTLDEVAYLRFASVYKSFNCAEDFEQEIESLRAHRQALAAPPVGDNSEDN.

Residues 3–34 (CPSCNSESSRVVDSRSIEMGVSIRRRRECSEC) fold into a zinc finger. One can recognise an ATP-cone domain in the interval 46–136 (LLVVKRNGVT…VYKSFNCAED (91 aa)).

The protein belongs to the NrdR family. The cofactor is Zn(2+).

Its function is as follows. Negatively regulates transcription of bacterial ribonucleotide reductase nrd genes and operons by binding to NrdR-boxes. The sequence is that of Transcriptional repressor NrdR from Corynebacterium jeikeium (strain K411).